The chain runs to 121 residues: Amelogenin (121 aa).

2 disordered regions span residues 1 to 20 (LHHQ…HALQ) and 32 to 121 (QPMQ…WPAT). Over residues 48–58 (SVTPTQHHQSN) the composition is skewed to polar residues. Low complexity predominate over residues 59–71 (LPQPAQQPFQPQV). Residues 85 to 111 (PAHPMPPMPQPPLPPMFPMQPLPPLLP) are compositionally biased toward pro residues.

This sequence belongs to the amelogenin family.

Its subcellular location is the secreted. The protein localises to the extracellular space. The protein resides in the extracellular matrix. Its function is as follows. Plays a role in the biomineralization of teeth. Seems to regulate the formation of crystallites during the secretory stage of tooth enamel development. Thought to play a major role in the structural organization and mineralization of developing enamel. The chain is Amelogenin (AMEL) from Ornithorhynchus anatinus (Duckbill platypus).